We begin with the raw amino-acid sequence, 677 residues long: UPF0313 protein RPA0679 (677 aa).

Positions 335 to 601 (AWDMIKTSVT…VEAIKGLRQR (267 aa)) constitute a Radical SAM core domain. [4Fe-4S] cluster-binding residues include cysteine 349, cysteine 353, and cysteine 356. The disordered stretch occupies residues 635–677 (RPDQLVPAHQPPGTGKAAGTRRPVRGDGPKPQRFTTKGVRLVK).

This sequence belongs to the UPF0313 family. The cofactor is [4Fe-4S] cluster.

The protein is UPF0313 protein RPA0679 of Rhodopseudomonas palustris (strain ATCC BAA-98 / CGA009).